The following is a 470-amino-acid chain: 3-isopropylmalate dehydratase large subunit (470 aa).

The [4Fe-4S] cluster site is built by C351, C411, and C414.

The protein belongs to the aconitase/IPM isomerase family. LeuC type 1 subfamily. In terms of assembly, heterodimer of LeuC and LeuD. [4Fe-4S] cluster serves as cofactor.

It carries out the reaction (2R,3S)-3-isopropylmalate = (2S)-2-isopropylmalate. Its pathway is amino-acid biosynthesis; L-leucine biosynthesis; L-leucine from 3-methyl-2-oxobutanoate: step 2/4. Catalyzes the isomerization between 2-isopropylmalate and 3-isopropylmalate, via the formation of 2-isopropylmaleate. The chain is 3-isopropylmalate dehydratase large subunit from Rhodopseudomonas palustris (strain BisB5).